Consider the following 250-residue polypeptide: Probable 2' cyclic ADP-D-ribose synthase TcpB (250 aa).

Residues 1–46 are disordered; that stretch reads MSKEKQAQSKAHKAQQAISSAKSLSTQKSKMSELERATRDGAAIGK. Low complexity predominate over residues 14–23; sequence AQQAISSAKS. Residues 30–39 are compositionally biased toward basic and acidic residues; it reads KMSELERATR. One can recognise a TIR domain in the interval 117–250; sequence EEYDFFISHA…EIAKELHSLI (134 aa). Residue Glu-192 is part of the active site.

Homodimer. Interacts with host TIRAP. Interacts with host TLR4, abolishes the interaction of host TIRAP with TLR4.

The protein localises to the secreted. Its subcellular location is the host cell membrane. It carries out the reaction NAD(+) + H2O = ADP-D-ribose + nicotinamide + H(+). The catalysed reaction is NAD(+) = 2'cADPR + nicotinamide + H(+). Functionally, virulence factor that interferes with host Toll-like receptor 2 (TLR2) signaling, resulting in the reduction of dendritic cell maturation, inhibition of pro-inflammatory cytokine secretion and impaired NF-kappa-B activation in macrophages. Also acts on host TLR4. Binds host lipids. Has NAD(+) hydrolase (NADase) activity, catalyzes cleavage of NAD(+) into ADP-D-ribose (ADPR) and nicotinamide, also generates a cyclization variant of cyclic ADPR (cADPR), termed v-cADPR (probably 2'cADPR). The sequence is that of Probable 2' cyclic ADP-D-ribose synthase TcpB from Brucella abortus (strain 2308).